A 302-amino-acid polypeptide reads, in one-letter code: Glycine--tRNA ligase alpha subunit (302 aa).

Belongs to the class-II aminoacyl-tRNA synthetase family. Tetramer of two alpha and two beta subunits.

It localises to the cytoplasm. It catalyses the reaction tRNA(Gly) + glycine + ATP = glycyl-tRNA(Gly) + AMP + diphosphate. The sequence is that of Glycine--tRNA ligase alpha subunit from Xanthomonas oryzae pv. oryzae (strain MAFF 311018).